A 427-amino-acid polypeptide reads, in one-letter code: Adenylosuccinate synthetase (427 aa).

Residues 12-18 (GDEGKGK) and 40-42 (GHT) contribute to the GTP site. The active-site Proton acceptor is the Asp13. Positions 13 and 40 each coordinate Mg(2+). Residues 13–16 (DEGK), 38–41 (NAGH), Thr128, Arg142, Gln223, Thr238, and Arg302 each bind IMP. His41 serves as the catalytic Proton donor. A substrate-binding site is contributed by 298-304 (VTTGRAR). Residues Arg304, 330–332 (KLD), and 412–414 (GVG) each bind GTP.

It belongs to the adenylosuccinate synthetase family. In terms of assembly, homodimer. Requires Mg(2+) as cofactor.

The protein localises to the cytoplasm. It catalyses the reaction IMP + L-aspartate + GTP = N(6)-(1,2-dicarboxyethyl)-AMP + GDP + phosphate + 2 H(+). It participates in purine metabolism; AMP biosynthesis via de novo pathway; AMP from IMP: step 1/2. Plays an important role in the de novo pathway of purine nucleotide biosynthesis. Catalyzes the first committed step in the biosynthesis of AMP from IMP. The sequence is that of Adenylosuccinate synthetase from Parafrankia sp. (strain EAN1pec).